A 457-amino-acid polypeptide reads, in one-letter code: Putative metabolite transport protein YwtG (457 aa).

12 consecutive transmembrane segments (helical) span residues 7 to 27 (IWLYFFGALGGALYGYDTGVI), 38 to 58 (LGLNAFTEGLVVSSLLVGAIL), 75 to 95 (AIMAAALLFCIGGLGVALAPN), 97 to 117 (GVMVLFRIILGLAVGTSTTIV), 136 to 156 (LNQLMITVGILLSYIVNYIFA), 163 to 183 (WMLGLAAVPSLLLLIGILFMP), 240 to 260 (ALIAGLGLAFLQQFIGTNTII), 276 to 296 (ASILGTVGIGTVNVLMTLVAI), 309 to 329 (LFGNAGMVISLIVLALVNLFF), 340 to 360 (VICLGVFIVVFAVSWGPVVWV), 377 to 397 (VSTLMLHVGTLIVSLTYPILM), and 400 to 420 (IGISYLFLIYAAIGIMAFLFV). The segment at 438 to 457 (DLRDKNGQGGAAGKQQTVGT) is disordered.

Belongs to the major facilitator superfamily. Sugar transporter (TC 2.A.1.1) family.

The protein localises to the cell membrane. In Bacillus subtilis (strain 168), this protein is Putative metabolite transport protein YwtG (ywtG).